Here is a 355-residue protein sequence, read N- to C-terminus: Poly(3-hydroxyalkanoate) polymerase subunit PhaC (355 aa).

The AB hydrolase-1 domain occupies 68–333; the sequence is PLLIVYALVN…LAFPGGHIGI (266 aa). The active site involves Cys-148.

The protein belongs to the PHA/PHB synthase family. Type III PhaC subfamily. In terms of assembly, forms a heterodimer with PhaE, which may multimerize in the presence of 3-hydroxybutyryl-CoA.

It localises to the cytoplasm. It catalyses the reaction (3R)-3-hydroxybutanoyl-CoA + [(3R)-hydroxybutanoate](n) = [(3R)-hydroxybutanoate](n+1) + CoA. The protein operates within biopolymer metabolism; poly-(R)-3-hydroxybutanoate biosynthesis. Functionally, polymerizes D(-)-3-hydroxybutyryl-CoA to create PHB which consists of thousands of hydroxybutyrate molecules linked end to end. PHB serves as an intracellular energy reserve material when cells grow under conditions of nutrient limitation. This is Poly(3-hydroxyalkanoate) polymerase subunit PhaC from Thiocystis violacea.